Consider the following 142-residue polypeptide: Hemoglobin F-I (142 aa).

The 141-residue stretch at 2–142 (GLTTAQIKAI…AAGVLVAAMK (141 aa)) folds into the Globin domain. H95 is a heme b binding site.

This sequence belongs to the globin family. In terms of assembly, homotetramer.

Hemoglobin F-I appears to function in storage, rather than transport of oxygen. The chain is Hemoglobin F-I from Urechis caupo (Innkeeper worm).